A 532-amino-acid polypeptide reads, in one-letter code: Flavin-containing monooxygenase 1 (532 aa).

Position 2 is an N-acetylalanine (Ala2). The Lumenal segment spans residues 2 to 510 (AKRVAIVGAG…TRIVQESPTP (509 aa)). Residues 9–13 (GAGVS), Glu32, 40–41 (LW), and 61–62 (NS) contribute to the FAD site. NADP(+) contacts are provided by residues 60 to 61 (SN) and 195 to 198 (SGTD). A helical transmembrane segment spans residues 511 to 531 (FASLLKLLSLLALLMAIFLIF). Leu532 is a topological domain (cytoplasmic).

The protein belongs to the FMO family. Requires FAD as cofactor. In terms of tissue distribution, liver.

The protein localises to the endoplasmic reticulum membrane. It carries out the reaction hypotaurine + NADPH + O2 + H(+) = taurine + NADP(+) + H2O. It catalyses the reaction hypotaurine + NADH + O2 + H(+) = taurine + NAD(+) + H2O. The catalysed reaction is trimethylamine + NADPH + O2 = trimethylamine N-oxide + NADP(+) + H2O. The enzyme catalyses N,N-dimethylaniline + NADPH + O2 + H(+) = N,N-dimethylaniline N-oxide + NADP(+) + H2O. In terms of biological role, broad spectrum monooxygenase that catalyzes the oxygenation of a wide variety of nitrogen- and sulfur-containing compounds including xenobiotics. Catalyzes the S-oxygenation of hypotaurine to produce taurine, an organic osmolyte involved in cell volume regulation as well as a variety of cytoprotective and developmental processes. In vitro, catalyzes the N-oxygenation of trimethylamine (TMA) to produce trimethylamine N-oxide (TMAO) and could therefore participate to the detoxification of this compound that is generated by the action of gut microbiota from dietary precursors such as choline, choline containing compounds, betaine or L-carnitine. This Canis lupus familiaris (Dog) protein is Flavin-containing monooxygenase 1 (FMO1).